The chain runs to 113 residues: Hydrogenase maturation factor HypA (113 aa).

H2 lines the Ni(2+) pocket. Positions 73, 76, 89, and 92 each coordinate Zn(2+).

The protein belongs to the HypA/HybF family.

Functionally, involved in the maturation of [NiFe] hydrogenases. Required for nickel insertion into the metal center of the hydrogenase. This chain is Hydrogenase maturation factor HypA, found in Chlorobaculum tepidum (strain ATCC 49652 / DSM 12025 / NBRC 103806 / TLS) (Chlorobium tepidum).